We begin with the raw amino-acid sequence, 412 residues long: Putative competence-damage inducible protein (412 aa).

Belongs to the CinA family.

This chain is Putative competence-damage inducible protein, found in Bacillus mycoides (strain KBAB4) (Bacillus weihenstephanensis).